The primary structure comprises 119 residues: Large ribosomal subunit protein bL20 (119 aa).

The protein belongs to the bacterial ribosomal protein bL20 family.

Its function is as follows. Binds directly to 23S ribosomal RNA and is necessary for the in vitro assembly process of the 50S ribosomal subunit. It is not involved in the protein synthesizing functions of that subunit. The protein is Large ribosomal subunit protein bL20 of Clostridium botulinum (strain ATCC 19397 / Type A).